Reading from the N-terminus, the 145-residue chain is Hemoglobin fetal subunit beta (145 aa).

A Globin domain is found at 1–145 (MLSAEEKAAV…VANALAHRYH (145 aa)). Residues His-62 and His-91 each contribute to the heme b site.

It belongs to the globin family. As to quaternary structure, heterotetramer of two alpha chains and two beta chains. In terms of tissue distribution, red blood cells.

Involved in oxygen transport from the lung to the various peripheral tissues. The chain is Hemoglobin fetal subunit beta from Bos taurus (Bovine).